The following is a 1490-amino-acid chain: Leucine-rich repeat-containing protein 7 (1490 aa).

LRR repeat units follow at residues 23 to 44 (IISV…VFNF), 47 to 68 (TLEE…LFNC), 70 to 91 (ALRK…IASL), 93 to 114 (NLKE…IKCC), 116 to 137 (CLTI…FTQL), 139 to 161 (NLTQ…GRLV), 162 to 183 (KLRI…MHKL), 185 to 206 (QLER…LDQI), 208 to 229 (NLRE…IGKL), 231 to 253 (MLVY…SGCE), 254 to 275 (ALED…IGLL), 277 to 298 (KLTT…IGNL), 300 to 321 (LLEE…IGYL), 323 to 344 (SLRT…IGSC), 346 to 367 (NVTV…IGQM), 369 to 391 (RLRV…TKLK), and 392 to 413 (ELAA…QTEA). Residues serine 439, serine 441, and serine 443 each carry the phosphoserine modification. The span at 663–676 (KKESTDESEVDKTH) shows a compositional bias: basic and acidic residues. Disordered regions lie at residues 663-704 (KKES…NTRM), 785-807 (AGEN…AHGR), and 822-899 (ELEQ…YHDP). Over residues 677–686 (CLNNSVSSGT) the composition is skewed to polar residues. The segment covering 687 to 700 (YSDYSPSQASSASS) has biased composition (low complexity). The residue at position 831 (threonine 831) is a Phosphothreonine. Serine 850 is subject to Phosphoserine. The span at 859–871 (PSKLETTPTTSPL) shows a compositional bias: low complexity. The residue at position 865 (threonine 865) is a Phosphothreonine. The residue at position 869 (serine 869) is a Phosphoserine. Positions 872–882 (PERKDHMKEPT) are enriched in basic and acidic residues. Serine 947, serine 949, and serine 1118 each carry phosphoserine. The segment covering 1134 to 1144 (PHELPPGDRYG) has biased composition (basic and acidic residues). 2 disordered regions span residues 1134–1158 (PHEL…QSSI) and 1196–1218 (QRRP…TRPV). Arginine 1149 is subject to Omega-N-methylarginine. Over residues 1196–1217 (QRRPLSARSYSTESYGASQTRP) the composition is skewed to polar residues. A Phosphoserine modification is found at serine 1233. Disordered stretches follow at residues 1238–1265 (GNYG…SCGK) and 1282–1312 (RLDR…PYPL). The span at 1243–1263 (KTSDNSDIKTRPTPVKGEESC) shows a compositional bias: basic and acidic residues. The span at 1286-1307 (TPSQQSNILDNGQEDVSPSGQW) shows a compositional bias: polar residues. Serine 1288 and serine 1392 each carry phosphoserine. One can recognise a PDZ domain in the interval 1398-1488 (EQFCVRIEKN…TVDLVIQREL (91 aa)).

Belongs to the LAP (LRR and PDZ) protein family. Interacts with CNKSR2 and DLG4. Interacts with CTNND2/Catenin delta-2. Forms a complex with N-cadherin through CTNND2. Interacts with CAMK2A. As to expression, expressed in brain (at protein level).

The protein resides in the cytoplasm. The protein localises to the postsynaptic density. Its function is as follows. Required for normal synaptic spine architecture and function. Necessary for DISC1 and GRM5 localization to postsynaptic density complexes and for both N-methyl D-aspartate receptor-dependent and metabotropic glutamate receptor-dependent long term depression. This chain is Leucine-rich repeat-containing protein 7 (Lrrc7), found in Mus musculus (Mouse).